The primary structure comprises 337 residues: Fructose-1,6-bisphosphatase class 1 (337 aa).

The Mg(2+) site is built by glutamate 94, aspartate 116, leucine 118, and aspartate 119. Substrate contacts are provided by residues 119 to 122, asparagine 210, and lysine 276; that span reads DGSS. A Mg(2+)-binding site is contributed by glutamate 282.

The protein belongs to the FBPase class 1 family. As to quaternary structure, homotetramer. Requires Mg(2+) as cofactor.

Its subcellular location is the cytoplasm. The catalysed reaction is beta-D-fructose 1,6-bisphosphate + H2O = beta-D-fructose 6-phosphate + phosphate. It functions in the pathway carbohydrate biosynthesis; gluconeogenesis. The polypeptide is Fructose-1,6-bisphosphatase class 1 (Burkholderia orbicola (strain MC0-3)).